The chain runs to 123 residues: uncharacterized protein (123 aa).

Helical transmembrane passes span 9 to 31 (LLLR…WISF), 38 to 56 (VLTL…VFAV), 67 to 91 (VIAV…AALY), and 98 to 114 (VSIV…IISA).

The protein to E.coli YhgE.

Its subcellular location is the cell membrane. This is an uncharacterized protein from Bacillus subtilis (strain 168).